Here is a 376-residue protein sequence, read N- to C-terminus: Decapping nuclease RAI1 (376 aa).

Glu-168 lines the a divalent metal cation pocket. Substrate is bound by residues Cys-200 and Glu-217. The a divalent metal cation site is built by Asp-219, Glu-237, and Leu-238. The substrate site is built by Lys-239 and Gln-263.

Belongs to the DXO/Dom3Z family. Interacts with RAT1; the interaction is direct, stabilizes RAT1 protein structure and stimulates its exoribonuclease activity. The interaction also stimulates RAI1 pyrophosphohydrolase activity, probably by recruiting it to mRNA substrates. A divalent metal cation serves as cofactor.

The protein resides in the nucleus. The catalysed reaction is a 5'-end NAD(+)-phospho-ribonucleoside in mRNA + H2O = a 5'-end phospho-ribonucleoside in mRNA + NAD(+) + H(+). It catalyses the reaction a 5'-end (N(7)-methyl 5'-triphosphoguanosine)-ribonucleoside-ribonucleotide in mRNA + H2O = a (N(7)-methyl 5'-triphosphoguanosine)-nucleoside + a 5'-end phospho-ribonucleoside in mRNA + H(+). It carries out the reaction a 5'-end triphospho-ribonucleoside in mRNA + H2O = a 5'-end phospho-ribonucleoside in mRNA + diphosphate + H(+). Functionally, decapping enzyme for NAD-capped RNAs: specifically hydrolyzes the nicotinamide adenine dinucleotide (NAD) cap from a subset of RNAs by removing the entire NAD moiety from the 5'-end of an NAD-capped RNA. The NAD-cap is present at the 5'-end of some RNAs and snoRNAs. In contrast to the canonical 5'-end N7 methylguanosine (m7G) cap, the NAD cap promotes mRNA decay. Also acts as a non-canonical decapping enzyme that removes the entire cap structure of m7G capped or incompletely capped RNAs. Has decapping activity toward incomplete 5'-end m7G cap mRNAs such as unmethylated 5'-end-capped RNA (cap0), while it has no activity toward 2'-O-ribose methylated m7G cap (cap1). Also possesses RNA 5'-pyrophosphohydrolase activity by hydrolyzing the 5'-end triphosphate to release pyrophosphates. Stimulates exoribonuclease activity of Rat1, allowing it to degrade RNAs with stable secondary structure more effectively. In Gibberella zeae (strain ATCC MYA-4620 / CBS 123657 / FGSC 9075 / NRRL 31084 / PH-1) (Wheat head blight fungus), this protein is Decapping nuclease RAI1 (RAI1).